A 47-amino-acid polypeptide reads, in one-letter code: Ruminococcin-A (47 aa).

An N-terminal signal peptide occupies residues 1 to 23 (MRNDVLTLTNPMEENELEQILGG). Residues Thr-30 and Thr-39 each carry the 2,3-didehydrobutyrine modification. A cross-link (beta-methyllanthionine (Thr-Cys)) is located at residues 30 to 35 (TISHEC). Residues 32–46 (SHECNMNTWQFLFTC) constitute a cross-link (lanthionine (Ser-Cys)). Positions 45–47 (TCC) form a cross-link, beta-methyllanthionine (Thr-Cys).

It belongs to the type A lantibiotic family. Maturation of lantibiotics involves the enzymatic conversion of Thr, and Ser into dehydrated AA and the formation of thioether bonds with cysteine. This is followed by membrane translocation and cleavage of the modified precursor.

It localises to the secreted. In terms of biological role, lanthionine-containing peptide antibiotic (lantibiotic) active on Gram-positive bacteria. The bactericidal activity of lantibiotics is based on depolarization of energized bacterial cytoplasmic membranes, initiated by the formation of aqueous transmembrane pores. Ruminococcin A is a broad spectrum bacteriocin exhibiting activity against a wide range of pathogenic clostridia and B.longum. The sequence is that of Ruminococcin-A (rumA1) from Blautia hansenii (Ruminococcus hansenii).